The chain runs to 277 residues: Nuclear egress protein 2 (277 aa).

Over 1–250 the chain is Perinuclear space; it reads MEVIPNINSR…ASGECVTTIR (250 aa). The helical transmembrane segment at 251-271 threads the bilayer; it reads IPRYIVMLWIFSVLLAMVTWG. Residues 272–277 are Nuclear-facing; the sequence is SYRLYS.

It belongs to the herpesviridae NEC2 protein family. In terms of assembly, forms a heterohexameric complex with NEC1. In terms of processing, phosphorylated.

Its subcellular location is the host nucleus inner membrane. Functionally, plays an essential role in virion nuclear egress, the first step of virion release from infected cell. Within the host nucleus, NEC1 interacts with the newly formed capsid through the vertexes and directs it to the inner nuclear membrane by associating with NEC2. Induces the budding of the capsid at the inner nuclear membrane as well as its envelopment into the perinuclear space. There, the NEC1/NEC2 complex promotes the fusion of the enveloped capsid with the outer nuclear membrane and the subsequent release of the viral capsid into the cytoplasm where it will reach the secondary budding sites in the host Golgi or trans-Golgi network. The chain is Nuclear egress protein 2 from Gallid herpesvirus 2 (strain Chicken/Md5/ATCC VR-987) (GaHV-2).